The sequence spans 756 residues: Neutral ceramidase (756 aa).

The Cytoplasmic segment spans residues 1-11 (MAKRTFSTLEA). A helical; Signal-anchor for type II membrane protein membrane pass occupies residues 12–32 (FLIFLLVIMTVITVALLTLLF). Over 33-756 (VTSGTIENHK…ISSPFEVVTT (724 aa)) the chain is Lumenal. 4 O-linked (GalNAc...) threonine glycosylation sites follow: Thr-56, Thr-57, Thr-58, and Thr-64. Leu-110 contributes to the Ca(2+) binding site. His-170 is a Zn(2+) binding site. The N-linked (GlcNAc...) asparagine glycan is linked to Asn-193. A Zn(2+)-binding site is contributed by His-279. The Nucleophile role is filled by Ser-330. 2 cysteine pairs are disulfide-bonded: Cys-338-Cys-352 and Cys-345-Cys-360. Residues Asn-407 and Asn-444 are each glycosylated (N-linked (GlcNAc...) asparagine). Cys-424 and Cys-474 are disulfide-bonded. Residues Glu-516 and Tyr-555 each contribute to the Zn(2+) site. Asp-688, Ser-690, and Thr-693 together coordinate Ca(2+). A required for correct folding and localization region spans residues 746 to 756 (GISSPFEVVTT).

Belongs to the neutral ceramidase family. May interact with CAV1. Zn(2+) is required as a cofactor. Proteolytic cleavage of the N-terminus removes the signal-anchor and produces a soluble form of the protein. In terms of processing, N-glycosylated. Required for enzyme activity. Post-translationally, O-glycosylated. Required to retain it as a type II membrane protein at the cell surface. Phosphorylated. May prevent ubiquitination and subsequent degradation. In terms of processing, ubiquitinated, leading to its degradation by the proteasome. Ubiquitination is triggered by nitric oxide. Widely expressed. Strongly expressed in small intestine and to a lower extent in liver and kidney. Highly expressed in duodenum, jejunum and ileum along the brush border of the small intestine (at protein level).

The protein resides in the cell membrane. The protein localises to the membrane raft. It localises to the membrane. It is found in the caveola. Its subcellular location is the golgi apparatus membrane. The protein resides in the mitochondrion. The protein localises to the secreted. It localises to the extracellular exosome. It catalyses the reaction an N-acylsphing-4-enine + H2O = sphing-4-enine + a fatty acid. The enzyme catalyses N-hexadecanoylsphing-4-enine + H2O = sphing-4-enine + hexadecanoate. The catalysed reaction is N-dodecanoylsphing-4-enine + H2O = dodecanoate + sphing-4-enine. It carries out the reaction N-octadecanoylsphing-4-enine + H2O = sphing-4-enine + octadecanoate. It catalyses the reaction N-octanoylsphing-4-enine + H2O = octanoate + sphing-4-enine. The enzyme catalyses N-(hexanoyl)sphing-4-enine + H2O = hexanoate + sphing-4-enine. The catalysed reaction is N-tetradecanoylsphing-4-enine + H2O = tetradecanoate + sphing-4-enine. It carries out the reaction N-(9Z-octadecenoyl)-sphing-4-enine + H2O = sphing-4-enine + (9Z)-octadecenoate. It catalyses the reaction N-(15Z-tetracosenoyl)-sphing-4-enine + H2O = (15Z)-tetracosenoate + sphing-4-enine. The enzyme catalyses sphinganine + hexadecanoate = N-hexadecanoylsphinganine + H2O. The catalysed reaction is N-(octadecanoyl)-sphinganine + H2O = sphinganine + octadecanoate. It functions in the pathway lipid metabolism; sphingolipid metabolism. Inhibited by D-erythro-MAPP. Plasma membrane ceramidase that hydrolyzes sphingolipid ceramides into sphingosine and free fatty acids at neutral pH. Ceramides, sphingosine, and its phosphorylated form sphingosine-1-phosphate are bioactive lipids that mediate cellular signaling pathways regulating several biological processes including cell proliferation, apoptosis and differentiation. Also catalyzes the reverse reaction allowing the synthesis of ceramides from fatty acids and sphingosine. Together with sphingomyelinase, participates in the production of sphingosine and sphingosine-1-phosphate from the degradation of sphingomyelin, a sphingolipid enriched in the plasma membrane of cells. Also participates in the hydrolysis of ceramides from the extracellular milieu allowing the production of sphingosine-1-phosphate inside and outside cells. This is the case for instance with the digestion of dietary sphingolipids in the intestinal tract. This Mus musculus (Mouse) protein is Neutral ceramidase (Asah2).